A 143-amino-acid polypeptide reads, in one-letter code: Nucleoside diphosphate kinase (143 aa).

Positions 11, 59, 87, 93, 104, and 114 each coordinate ATP. H117 acts as the Pros-phosphohistidine intermediate in catalysis.

Belongs to the NDK family. In terms of assembly, homotetramer. It depends on Mg(2+) as a cofactor.

Its subcellular location is the cytoplasm. It catalyses the reaction a 2'-deoxyribonucleoside 5'-diphosphate + ATP = a 2'-deoxyribonucleoside 5'-triphosphate + ADP. It carries out the reaction a ribonucleoside 5'-diphosphate + ATP = a ribonucleoside 5'-triphosphate + ADP. Its function is as follows. Major role in the synthesis of nucleoside triphosphates other than ATP. The ATP gamma phosphate is transferred to the NDP beta phosphate via a ping-pong mechanism, using a phosphorylated active-site intermediate. This Alteromonas mediterranea (strain DSM 17117 / CIP 110805 / LMG 28347 / Deep ecotype) protein is Nucleoside diphosphate kinase.